A 401-amino-acid chain; its full sequence is Inactive (1R,4R,5S)-(-)-guaia-6,10(14)-diene synthase (401 aa).

The disordered stretch occupies residues 1-20; the sequence is MVKFDSGSESEMTNGDELHI. 2 residues coordinate Mg(2+): Asp-134 and Glu-139. The DDXXD motif motif lies at 134-138; sequence DDQFD. A substrate-binding site is contributed by Arg-242. Ser-292 is a binding site for Mg(2+). Residue Lys-295 coordinates substrate. Asp-296 contacts Mg(2+). Residue 375 to 376 participates in substrate binding; sequence RY.

It belongs to the terpene synthase family. The cofactor is Mg(2+).

The sequence is that of Inactive (1R,4R,5S)-(-)-guaia-6,10(14)-diene synthase from Gibberella fujikuroi (strain CBS 195.34 / IMI 58289 / NRRL A-6831) (Bakanae and foot rot disease fungus).